Consider the following 233-residue polypeptide: Probable transglycosylase IsaA (233 aa).

The N-terminal stretch at 1–29 (MKKTIMASSLAVALGVTGYAASTGHEAHA) is a signal peptide.

Belongs to the transglycosylase family. IsaA subfamily.

The protein localises to the secreted. In terms of biological role, is able to cleave peptidoglycan. This chain is Probable transglycosylase IsaA (isaA), found in Staphylococcus aureus (strain bovine RF122 / ET3-1).